An 837-amino-acid chain; its full sequence is Ubiquitin carboxyl-terminal hydrolase A (837 aa).

Residues 166–277 (PSAFAESIIQ…QHLTHWGLNP (112 aa)) form a UBP-type; degenerate zinc finger. The USP domain occupies 319–835 (TGIENLGNSC…LGYIYFYKRQ (517 aa)). Catalysis depends on Cys-328, which acts as the Nucleophile. A UBA 1 domain is found at 628–669 (SFNQEVLDTLLSMDFPLVRCKKALLATGGKDAELAMNWIFEH). The disordered stretch occupies residues 676-695 (DIEQTPVNNNNNNNNSSNSN). Residues 683-695 (NNNNNNNNSSNSN) show a composition bias toward low complexity. Residues 700-740 (VFNSQDVDNIIGMGFTDSQAKLALKNTKGNLERAADWLFSH) enclose the UBA 2 domain. His-797 (proton acceptor) is an active-site residue.

It belongs to the peptidase C19 family.

It catalyses the reaction Thiol-dependent hydrolysis of ester, thioester, amide, peptide and isopeptide bonds formed by the C-terminal Gly of ubiquitin (a 76-residue protein attached to proteins as an intracellular targeting signal).. In terms of biological role, required for development but not growth. The polypeptide is Ubiquitin carboxyl-terminal hydrolase A (ubpA) (Dictyostelium discoideum (Social amoeba)).